Reading from the N-terminus, the 1102-residue chain is Phosphatidylinositol 4,5-bisphosphate 3-kinase catalytic subunit gamma isoform (1102 aa).

Residues 34–141 enclose the PI3K-ABD domain; that stretch reads SMELIPIEFV…PGQIHVVQRH (108 aa). Residues 217–309 form the PI3K-RBD domain; sequence NNCVFIVIHR…GEEIHLVLDT (93 aa). The C2 PI3K-type domain maps to 357 to 521; the sequence is CDRKFRVKIR…NSMSISILLD (165 aa). Residues 541-723 form the PIK helical domain; sequence DRVRAEMPNQ…AVILEAYLRG (183 aa). The region spanning 797–1080 is the PI3K/PI4K catalytic domain; sequence VIEKCKVMAS…QIEVCRDKGW (284 aa). A G-loop region spans residues 803 to 809; the sequence is VMASKKK. Residues 829 to 838 and 864 to 872 each bind ATP; these read GIIFKHGDDL and LLPYGCIST. The interval 943–951 is catalytic loop; that stretch reads GIGDRHNDN. 961–969 lines the ATP pocket; it reads FHIDFGHIL. Positions 962–988 are activation loop; that stretch reads HIDFGHILGNYKSFLGINKERVPFVLT. At Thr-1024 the chain carries Phosphothreonine; by PKA. Ser-1101 carries the post-translational modification Phosphoserine; by autocatalysis.

It belongs to the PI3/PI4-kinase family. Heterodimer of a catalytic subunit PIK3CG and a PIK3R5 or PIK3R6 regulatory subunit. Interacts with GRK2 through the PIK helical domain. Interaction with GRK2 is required for targeting to agonist-occupied receptor. Interacts with PDE3B; regulates PDE3B activity and thereby cAMP levels in cells. Interacts with TPM2. Interacts with EPHA8; regulates integrin-mediated cell adhesion to substrate. Interacts with HRAS; the interaction is required for membrane recruitment and beta-gamma G protein dimer-dependent activation of the PI3K gamma complex PIK3CG:PIK3R6. Autophosphorylation at Ser-1101 has no effect on the phosphatidylinositol-4,5-bisphosphate 3-kinase activity.

It localises to the cytoplasm. It is found in the cell membrane. It carries out the reaction a 1,2-diacyl-sn-glycero-3-phospho-(1D-myo-inositol-4,5-bisphosphate) + ATP = a 1,2-diacyl-sn-glycero-3-phospho-(1D-myo-inositol-3,4,5-trisphosphate) + ADP + H(+). The catalysed reaction is a 1,2-diacyl-sn-glycero-3-phospho-(1D-myo-inositol) + ATP = a 1,2-diacyl-sn-glycero-3-phospho-(1D-myo-inositol-3-phosphate) + ADP + H(+). It catalyses the reaction a 1,2-diacyl-sn-glycero-3-phospho-(1D-myo-inositol 4-phosphate) + ATP = a 1,2-diacyl-sn-glycero-3-phospho-(1D-myo-inositol-3,4-bisphosphate) + ADP + H(+). The enzyme catalyses L-seryl-[protein] + ATP = O-phospho-L-seryl-[protein] + ADP + H(+). The protein operates within phospholipid metabolism; phosphatidylinositol phosphate biosynthesis. Its activity is regulated as follows. Activated by both the alpha and the beta-gamma G proteins following stimulation of G protein-coupled receptors (GPCRs). Activation by GPCRs is assisted by the regulatory subunits (PIK3R5 or PIK3R6) leading to the translocation from the cytosol to the plasma membrane and to kinase activation. When bound to PIK3R5 the PI3K activity of PIK3CG could be activated greater than 100-fold by the beta-gamma G proteins. Functionally, phosphoinositide-3-kinase (PI3K) that phosphorylates PtdIns(4,5)P2 (Phosphatidylinositol 4,5-bisphosphate) to generate phosphatidylinositol 3,4,5-trisphosphate (PIP3). PIP3 plays a key role by recruiting PH domain-containing proteins to the membrane, including AKT1 and PDPK1, activating signaling cascades involved in cell growth, survival, proliferation, motility and morphology. Links G-protein coupled receptor activation to PIP3 production. Involved in immune, inflammatory and allergic responses. Modulates leukocyte chemotaxis to inflammatory sites and in response to chemoattractant agents. May control leukocyte polarization and migration by regulating the spatial accumulation of PIP3 and by regulating the organization of F-actin formation and integrin-based adhesion at the leading edge. Controls motility of dendritic cells. Participates in T-lymphocyte migration. Regulates T-lymphocyte proliferation and cytokine production. Required for B-lymphocyte development and signaling. Together with other PI3Ks are involved in the oxidative burst produced by neutrophils in response to chemotactic agents. Together with PIK3CD regulate neutrophil extravasation. Together with PIK3CB promotes platelet aggregation and thrombosis. Regulates alpha-IIb/beta-3 integrins (ITGA2B/ ITGB3) adhesive function in platelets downstream of P2Y12 through a lipid kinase activity-independent mechanism. May have also a lipid kinase activity-dependent function in platelet aggregation. Involved in endothelial progenitor cell migration. Negative regulator of cardiac contractility. Modulates cardiac contractility by anchoring protein kinase A (PKA) and PDE3B activation, reducing cAMP levels. Regulates cardiac contractility also by promoting beta-adrenergic receptor internalization by binding to GRK2 and by non-muscle tropomyosin phosphorylation. Also has serine/threonine protein kinase activity: both lipid and protein kinase activities are required for beta-adrenergic receptor endocytosis. May also have a scaffolding role in modulating cardiac contractility. Contribute to cardiac hypertrophy under pathological stress. Through simultaneous binding of PDE3B to RAPGEF3 and PIK3R6 is assembled in a signaling complex in which the PI3K gamma complex is activated by RAPGEF3 and which is involved in angiogenesis. In neutrophils, participates in a phospholipase C-activating N-formyl peptide-activated GPCR (G protein-coupled receptor) signaling pathway downstream of RASGRP4-mediated Ras-activation, to promote neutrophil functional responses. The polypeptide is Phosphatidylinositol 4,5-bisphosphate 3-kinase catalytic subunit gamma isoform (PIK3CG) (Sus scrofa (Pig)).